Here is an 862-residue protein sequence, read N- to C-terminus: Valine--tRNA ligase (862 aa).

The 'HIGH' region motif lies at 44–53 (NVTGSLHMGH). Residues cysteine 176, cysteine 179, cysteine 344, cysteine 347, cysteine 417, cysteine 420, cysteine 438, and cysteine 441 each contribute to the Zn(2+) site. Positions 528–532 (KMSKS) match the 'KMSKS' region motif. An ATP-binding site is contributed by lysine 531. Residues 802–862 (RRRQEKRLKE…RIREALSQIG (61 aa)) adopt a coiled-coil conformation.

It belongs to the class-I aminoacyl-tRNA synthetase family. ValS type 1 subfamily. As to quaternary structure, monomer. It depends on Zn(2+) as a cofactor.

Its subcellular location is the cytoplasm. It catalyses the reaction tRNA(Val) + L-valine + ATP = L-valyl-tRNA(Val) + AMP + diphosphate. Catalyzes the attachment of valine to tRNA(Val). As ValRS can inadvertently accommodate and process structurally similar amino acids such as threonine, to avoid such errors, it has a 'posttransfer' editing activity that hydrolyzes mischarged Thr-tRNA(Val) in a tRNA-dependent manner. This Thermus thermophilus (strain ATCC 27634 / DSM 579 / HB8) protein is Valine--tRNA ligase.